Consider the following 575-residue polypeptide: Acetolactate synthase large subunit (575 aa).

Glu57 contributes to the thiamine diphosphate binding site. FAD contacts are provided by residues Arg159, 265 to 286 (HGSYAANMALVEADYIINLGSR), and 308 to 327 (DIDAAELGKIVKTDIPILSD). Residues 395–475 (QHQMWVAQYY…IKVVLINNHS (81 aa)) form a thiamine pyrophosphate binding region. Positions 446 and 473 each coordinate Mg(2+).

The protein belongs to the TPP enzyme family. Dimer of large and small chains. The cofactor is Mg(2+). Requires thiamine diphosphate as cofactor.

The enzyme catalyses 2 pyruvate + H(+) = (2S)-2-acetolactate + CO2. The protein operates within amino-acid biosynthesis; L-isoleucine biosynthesis; L-isoleucine from 2-oxobutanoate: step 1/4. It functions in the pathway amino-acid biosynthesis; L-valine biosynthesis; L-valine from pyruvate: step 1/4. This is Acetolactate synthase large subunit (ilvB) from Lactococcus lactis subsp. lactis (strain IL1403) (Streptococcus lactis).